We begin with the raw amino-acid sequence, 29 residues long: MNFGMLKLLTVLIICYSNNFMRTRGGNGK.

Positions 1 to 15 (MNFGMLKLLTVLIIC) are cleaved as a signal peptide. Position 27 is an asparagine amide (N27).

Belongs to the limacoditoxin-12 family. As to expression, expressed by the venom secretory cell of the spine. The spine is a cuticular structure containing a single large nucleated venom-secreting cell at its base. It is an independent unit capable of producing, storing and injecting venom. On the back of D.vulnerans caterpillars, spines are grouped together by 50 to 100 to form scoli, of which there are eight in D.vulnerans.

It localises to the secreted. Probable toxin. Does not show insecticidal, antimicrobial and antiparasitic activities. Does not induce increase in intracellular calcium in mouse DRG neurons, suggesting that it does not induce pain. The protein is U-limacoditoxin(12)-Dv72 of Doratifera vulnerans (Mottled cup moth).